A 361-amino-acid polypeptide reads, in one-letter code: GDSL esterase/lipase At2g40250 (361 aa).

A signal peptide spans 1-28 (MNRNQHKPMFVTFLINILLLQLLNLTNA). The active-site Nucleophile is serine 43. Catalysis depends on residues aspartate 337 and histidine 340.

Belongs to the 'GDSL' lipolytic enzyme family.

It localises to the secreted. This chain is GDSL esterase/lipase At2g40250, found in Arabidopsis thaliana (Mouse-ear cress).